A 474-amino-acid chain; its full sequence is Ribulose bisphosphate carboxylase large chain (474 aa).

2 residues coordinate substrate: asparagine 122 and threonine 172. The active-site Proton acceptor is lysine 174. Lysine 176 is a binding site for substrate. Positions 200, 202, and 203 each coordinate Mg(2+). Lysine 200 is modified (N6-carboxylysine). Histidine 293 serves as the catalytic Proton acceptor. Residues arginine 294, histidine 326, and serine 378 each coordinate substrate.

This sequence belongs to the RuBisCO large chain family. Type I subfamily. As to quaternary structure, heterohexadecamer of 8 large chains and 8 small chains; disulfide-linked. The disulfide link is formed within the large subunit homodimers. It depends on Mg(2+) as a cofactor. The disulfide bond which can form in the large chain dimeric partners within the hexadecamer appears to be associated with oxidative stress and protein turnover.

Its subcellular location is the carboxysome. The enzyme catalyses 2 (2R)-3-phosphoglycerate + 2 H(+) = D-ribulose 1,5-bisphosphate + CO2 + H2O. The catalysed reaction is D-ribulose 1,5-bisphosphate + O2 = 2-phosphoglycolate + (2R)-3-phosphoglycerate + 2 H(+). RuBisCO catalyzes two reactions: the carboxylation of D-ribulose 1,5-bisphosphate, the primary event in carbon dioxide fixation, as well as the oxidative fragmentation of the pentose substrate in the photorespiration process. Both reactions occur simultaneously and in competition at the same active site. In Synechococcus sp. (strain JA-3-3Ab) (Cyanobacteria bacterium Yellowstone A-Prime), this protein is Ribulose bisphosphate carboxylase large chain.